Consider the following 417-residue polypeptide: Putative UDP-arabinose 4-epimerase 2 (417 aa).

Over 1–31 the chain is Cytoplasmic; that stretch reads MLNLGRARTGRQNRSMSFEGLDFADPKKNNN. A helical; Signal-anchor for type II membrane protein membrane pass occupies residues 32-54; the sequence is YMGKIVLVMTLTAMCILLLNQSP. The Lumenal segment spans residues 55–417; the sequence is TFNTPSVFSR…YGSSSLVSAY (363 aa). 71–102 contacts NAD(+); that stretch reads HVLVTGGAGYIGSHAALRLLKDSYRVTIVDNL. Y219 (proton acceptor) is an active-site residue.

This sequence belongs to the NAD(P)-dependent epimerase/dehydratase family. The cofactor is NAD(+).

It is found in the golgi apparatus. Its subcellular location is the golgi stack membrane. It catalyses the reaction UDP-beta-L-arabinopyranose = UDP-alpha-D-xylose. It participates in nucleotide-sugar biosynthesis; UDP-L-arabinose biosynthesis; UDP-L-arabinose from UDP-alpha-D-xylose: step 1/1. The protein operates within cell wall biogenesis; cell wall polysaccharide biosynthesis. This is Putative UDP-arabinose 4-epimerase 2 from Arabidopsis thaliana (Mouse-ear cress).